A 349-amino-acid chain; its full sequence is Transcription elongation factor A protein 3 (349 aa).

Positions 5–82 constitute a TFIIS N-terminal domain; sequence EELLRIAKKL…RNWKQLLDSP (78 aa). Positions 80–170 are disordered; sequence DSPATPKGEK…RTPSSPSSPT (91 aa). Positions 101–110 are enriched in basic and acidic residues; it reads KGLDCSDWKP. Ser-115 is subject to Phosphoserine. Positions 121–133 are enriched in basic and acidic residues; that stretch reads RVEEPKDRRDSVD. Low complexity-rich tracts occupy residues 134-144 and 160-170; these read SKSSATSSPKR and PRTPSSPSSPT. A Phosphoserine modification is found at Ser-141. One can recognise a TFIIS central domain in the interval 188 to 304; it reads VRDKCVEMLS…EHQMAKTGGT (117 aa). Residues 307–347 form a TFIIS-type zinc finger; that stretch reads DLFQCSKCKKKNCTYNQVQTRSADEPMTTFVLCNECGNRWK. Residues Cys-311, Cys-314, Cys-339, and Cys-342 each contribute to the Zn(2+) site.

It belongs to the TFS-II family.

It is found in the nucleus. Necessary for efficient RNA polymerase II transcription elongation past template-encoded arresting sites. The arresting sites in DNA have the property of trapping a certain fraction of elongating RNA polymerases that pass through, resulting in locked ternary complexes. Cleavage of the nascent transcript by S-II allows the resumption of elongation from the new 3'-terminus. This Bos taurus (Bovine) protein is Transcription elongation factor A protein 3 (TCEA3).